The chain runs to 328 residues: Reticulocalbin-3 (328 aa).

Residues 1–20 (MMWRWTLMLLLLLLRHWALG) form the signal peptide. Positions 24–48 (PDAGPHGQDRVHHGTPLSEAPHDDA) are disordered. EF-hand domains lie at 75 to 112 (ESQARLGRIVDRMDLAGDSDGWVSLAELRAWIAHTQQR), 113 to 148 (HIRDSVSAAWHTYDTDRDGRVGWEELRNATYGHYEP), 163 to 198 (KMLARDERRFRVADQDGDSMATREELTAFLHPEEFP), 200 to 235 (MRDIVVAETLEDLDKNKDGYVQVEEYIADLYSAEPG), 241 to 276 (WVQTERQQFRDFRDLNKDGRLDGSEVGYWVLPPSQD), and 277 to 312 (QPLVEANHLLHESDTDKDGRLSKAEILSNWNMFVGS). The Ca(2+) site is built by aspartate 92, aspartate 94, tryptophan 96, glutamate 101, aspartate 126, aspartate 128, aspartate 130, arginine 132, and glutamate 137. N-linked (GlcNAc...) asparagine glycosylation occurs at asparagine 140. The Ca(2+) site is built by aspartate 176, aspartate 178, aspartate 180, methionine 182, glutamate 187, aspartate 213, asparagine 215, aspartate 217, tyrosine 219, glutamate 224, aspartate 254, asparagine 256, aspartate 258, arginine 260, glutamate 265, aspartate 290, aspartate 292, aspartate 294, arginine 296, and glutamate 301. A Prevents secretion from ER motif is present at residues 325–328 (HDEL).

It belongs to the CREC family. In terms of assembly, interacts with PCSK6 (immature form including the propeptide); probably involved in the maturation and the secretion of PCSK6. Post-translationally, N-glycosylated. In terms of processing, degraded by PCSK6 and other endoproteases including FURIN and PCSK5.

Its subcellular location is the endoplasmic reticulum lumen. Probable molecular chaperone assisting protein biosynthesis and transport in the endoplasmic reticulum. Required for the proper biosynthesis and transport of pulmonary surfactant-associated protein A/SP-A, pulmonary surfactant-associated protein D/SP-D and the lipid transporter ABCA3. By regulating both the proper expression and the degradation through the endoplasmic reticulum-associated protein degradation pathway of these proteins plays a crucial role in pulmonary surfactant homeostasis. Has an anti-fibrotic activity by negatively regulating the secretion of type I and type III collagens. This calcium-binding protein also transiently associates with immature PCSK6 and regulates its secretion. The polypeptide is Reticulocalbin-3 (Rattus norvegicus (Rat)).